We begin with the raw amino-acid sequence, 547 residues long: Chaperonin GroEL (547 aa).

Residues 30–33, 87–91, glycine 414, 478–480, and aspartate 494 each bind ATP; these read TLGP, DGTTT, and DAL.

Belongs to the chaperonin (HSP60) family. In terms of assembly, forms a cylinder of 14 subunits composed of two heptameric rings stacked back-to-back. Interacts with the co-chaperonin GroES.

It is found in the cytoplasm. It catalyses the reaction ATP + H2O + a folded polypeptide = ADP + phosphate + an unfolded polypeptide.. Functionally, together with its co-chaperonin GroES, plays an essential role in assisting protein folding. The GroEL-GroES system forms a nano-cage that allows encapsulation of the non-native substrate proteins and provides a physical environment optimized to promote and accelerate protein folding. This chain is Chaperonin GroEL, found in Desulforudis audaxviator (strain MP104C).